We begin with the raw amino-acid sequence, 279 residues long: MRKTVVDIIAMKAAGQKISMLTAYDASMSALLDQAGIDILLVGDSLGMTVLGYDSTVPVTMADMVHHMAAVRRGAPDAFVVGDMPFGSYQTGARDAVLNAMRLLKEGGCDVVKLEGGEVVCPVVKAIVDAGIPVMGHLGLTPQTAAVLGGYKVQGRDMEAARKLFADAKRLEEAGVCGLVLECIPAGLAEVVTASIAVPTVGIGAGKGCDGQVLVINDMLGLFEKFTPKFVKHYAQLAPLVRQGVENYIGEVRAGAFPEAEHTFTSSCDYKVLLSGDDQ.

Asp44 and Asp83 together coordinate Mg(2+). 3-methyl-2-oxobutanoate is bound by residues 44–45, Asp83, and Lys113; that span reads DS. Glu115 provides a ligand contact to Mg(2+). Glu182 functions as the Proton acceptor in the catalytic mechanism.

This sequence belongs to the PanB family. In terms of assembly, homodecamer; pentamer of dimers. Mg(2+) is required as a cofactor.

It is found in the cytoplasm. It catalyses the reaction 3-methyl-2-oxobutanoate + (6R)-5,10-methylene-5,6,7,8-tetrahydrofolate + H2O = 2-dehydropantoate + (6S)-5,6,7,8-tetrahydrofolate. It functions in the pathway cofactor biosynthesis; (R)-pantothenate biosynthesis; (R)-pantoate from 3-methyl-2-oxobutanoate: step 1/2. In terms of biological role, catalyzes the reversible reaction in which hydroxymethyl group from 5,10-methylenetetrahydrofolate is transferred onto alpha-ketoisovalerate to form ketopantoate. The protein is 3-methyl-2-oxobutanoate hydroxymethyltransferase of Desulfotalea psychrophila (strain LSv54 / DSM 12343).